The following is a 353-amino-acid chain: Chemerin-like receptor 2 (353 aa).

At 1 to 41 (MEVSREMLFEELDNYSYALEYYSQEPDAEENVYPGIVHWIS) the chain is on the extracellular side. N-linked (GlcNAc...) asparagine glycosylation is present at Asn-14. Residues 42–62 (LLLYALAFVLGIPGNAIVIWF) form a helical membrane-spanning segment. Residues 63–73 (MGFKWKKTVTT) lie on the Cytoplasmic side of the membrane. The helical transmembrane segment at 74–94 (LWFLNLAIADFVFVLFLPLYI) threads the bilayer. Residues 95–112 (SYVALSFHWPFGRWLCKL) lie on the Extracellular side of the membrane. Cys-110 and Cys-187 form a disulfide bridge. Residues 113–133 (NSFIAQLNMFSSVFFLTVISL) form a helical membrane-spanning segment. Topologically, residues 134-154 (DRYIHLIHPGLSHPHRTLKNS) are cytoplasmic. Residues 155-175 (LLVVLFVWLLASLLGGPTLYF) traverse the membrane as a helical segment. The Extracellular portion of the chain corresponds to 176–210 (RDTVEVNNRIICYNNFQEYELTLMRHHVLTWVKFL). Residues 211–231 (FGYLLPLLTMSSCYLCLIFKT) form a helical membrane-spanning segment. The Cytoplasmic portion of the chain corresponds to 232–247 (KKQNILISSKHLWMIL). Residues 248 to 268 (SVVIAFMVCWTPFHLFSIWEL) traverse the membrane as a helical segment. Residues 269 to 286 (SIHHNSSFQNVLQGGIPL) are Extracellular-facing. A helical membrane pass occupies residues 287–307 (STGLAFLNSCLNPILYVLISK). Topologically, residues 308 to 353 (KFQARFRASVAEVLKRSLWEASCSGTVSEQLRSAETKSLSLLETAQ) are cytoplasmic.

It belongs to the chemokine-like receptor (CMKLR) family.

Its subcellular location is the cell membrane. Receptor for chemoattractant adipokine chemerin/RARRES2 suggesting a role for this receptor in the regulation of inflammation and energy homesotasis. Signals mainly via beta-arrestin pathway. Binding of RARRES2 activates weakly G proteins, calcium mobilization and MAPK1/MAPK3 (ERK1/2) phosphorylation too. Acts also as a receptor for TAFA1, mediates its effects on neuronal stem-cell proliferation and differentiation via the activation of ROCK/ERK and ROCK/STAT3 signaling pathway. This chain is Chemerin-like receptor 2 (Cmklr2), found in Rattus norvegicus (Rat).